A 462-amino-acid chain; its full sequence is CD-NTase-associated protein 4 (462 aa).

The N-terminal endonuclease domain stretch occupies residues 1-226; it reads MSASLLEKQS…FENFICHALE (226 aa). Residues D50, E67, and K69 contribute to the active site. D50 contacts Mg(2+). Positions 235-462 are C-terminal SAVED domain; that stretch reads DPIKINLSAS…QYIPTAELNL (228 aa). 2',3',3'-c-tri-AMP is bound by residues 299–301, W449, and Y454; that span reads KQR.

Belongs to the Cap4 nuclease family. As to quaternary structure, a monomer in the absence of ligand, in its presence it forms oligomers. A divalent metal cation serves as cofactor.

DNase activity is activated upon ligand binding. Inhibited by EDTA. Functionally, effector DNase of a CBASS antivirus system. CBASS (cyclic oligonucleotide-based antiphage signaling system) provides immunity against bacteriophage. The CD-NTase protein synthesizes cyclic nucleotides in response to infection; these serve as specific second messenger signals. The signals activate a diverse range of effectors, leading to bacterial cell death and thus abortive phage infection. A type II-C(AAAA) CBASS system. Binds cyclic nucleotide second messengers (synthesized by CdnD, the cognate CD-NTase in the CBASS operon). Ligand binding activates it to endonucleolytically degrade dsDNA to approximately 6 bp length fragments, with a preference for 5'-C or 5'-G cleavage site. The minor product of CdnD is the activating nucleotide; also binds the major product (2',3',3'-cyclic AMP-AMP-AMP) but is not activated by it. Only binds DNA in the presence of ligand. Is not activated by c-di-AMP, c-di-GMP, 3'3'-cyclic GMP-AMP (3'3'-cGAMP) or 3',3',3'-cyclic AMP-AMP-GMP. This Acinetobacter sp. (strain ATCC 27244 / 9458) protein is CD-NTase-associated protein 4.